The primary structure comprises 392 residues: 23S rRNA (uracil(747)-C(5))-methyltransferase RlmC (392 aa).

Positions 4, 12, 15, and 93 each coordinate [4Fe-4S] cluster. S-adenosyl-L-methionine-binding residues include Gln218, Phe247, Glu275, and Asn321. Residue Cys348 is the Nucleophile of the active site.

The protein belongs to the class I-like SAM-binding methyltransferase superfamily. RNA M5U methyltransferase family. RlmC subfamily.

The catalysed reaction is uridine(747) in 23S rRNA + S-adenosyl-L-methionine = 5-methyluridine(747) in 23S rRNA + S-adenosyl-L-homocysteine + H(+). Catalyzes the formation of 5-methyl-uridine at position 747 (m5U747) in 23S rRNA. The sequence is that of 23S rRNA (uracil(747)-C(5))-methyltransferase RlmC from Haemophilus influenzae (strain PittGG).